We begin with the raw amino-acid sequence, 130 residues long: Small ribosomal subunit protein uS9 (130 aa).

The protein belongs to the universal ribosomal protein uS9 family.

This chain is Small ribosomal subunit protein uS9, found in Shewanella baltica (strain OS155 / ATCC BAA-1091).